Reading from the N-terminus, the 84-residue chain is Small ribosomal subunit protein uS15 (84 aa).

The protein belongs to the universal ribosomal protein uS15 family. As to quaternary structure, part of the 30S ribosomal subunit. Forms a bridge to the 50S subunit in the 70S ribosome, contacting the 23S rRNA.

In terms of biological role, one of the primary rRNA binding proteins, it binds directly to 16S rRNA where it helps nucleate assembly of the platform of the 30S subunit by binding and bridging several RNA helices of the 16S rRNA. Functionally, forms an intersubunit bridge (bridge B4) with the 23S rRNA of the 50S subunit in the ribosome. In Thermosipho melanesiensis (strain DSM 12029 / CIP 104789 / BI429), this protein is Small ribosomal subunit protein uS15.